We begin with the raw amino-acid sequence, 338 residues long: Fructose-bisphosphate aldolase (338 aa).

Substrate-binding residues include Arg-50 and Lys-138. Catalysis depends on Glu-179, which acts as the Proton acceptor. Lys-221 functions as the Schiff-base intermediate with dihydroxyacetone-P in the catalytic mechanism.

Belongs to the class I fructose-bisphosphate aldolase family.

The enzyme catalyses beta-D-fructose 1,6-bisphosphate = D-glyceraldehyde 3-phosphate + dihydroxyacetone phosphate. It functions in the pathway carbohydrate degradation; glycolysis; D-glyceraldehyde 3-phosphate and glycerone phosphate from D-glucose: step 4/4. The chain is Fructose-bisphosphate aldolase from Encephalitozoon cuniculi (strain GB-M1) (Microsporidian parasite).